We begin with the raw amino-acid sequence, 230 residues long: DNA ADP-ribosyl transferase (230 aa).

The region spanning 26 to 230 (WIVWHFTHAD…KYVIKPGMYY (205 aa)) is the DarT domain. Residues 30 to 32 (HFT), G39, L47, and R67 each bind NAD(+). The active-site Proton acceptor is the R67. The active site involves E183.

This sequence belongs to the DarT ADP-ribosyltransferase family. As to quaternary structure, interacts with cognate antitoxin DarG (via C-terminus); this heterodimeric complex neutralizes the toxic effect of DarT by preventing ssDNA binding to DarT and consequently inactivating the toxin by direct protein-protein interactions.

It catalyses the reaction a thymidine in DNA + NAD(+) = an N-(ADP-alpha-D-ribosyl)-thymidine in DNA + nicotinamide + H(+). Toxic component of the hybrid type II/IV toxin-antitoxin (TA) system DarTG, which plays a crucial role in controlling bacterial growth and bacteriophage infection. ADP-ribosylates ssDNA, preferentially in the motif TTTW. In case of phage infection, DarT toxin ADP-ribosylates DNA, which inhibits both viral DNA and RNA synthesis and leads to abortive infection. Its toxic effect is neutralized by cognate antitoxin DarG. The sequence is that of DNA ADP-ribosyl transferase from Mycobacterium bovis (strain BCG / Pasteur 1173P2).